A 129-amino-acid chain; its full sequence is Transcription factor bHLH138 (129 aa).

Over residues 1-18 the composition is skewed to basic and acidic residues; the sequence is MERYTKKNERFKAEEGKG. The segment at 1–24 is disordered; it reads MERYTKKNERFKAEEGKGSKKSRT. Residues 19–68 form the bHLH domain; it reads SKKSRTFLTERERRALFNDRFFDLKNLIPNPTKGGEASIVQDGIVYINEL.

Belongs to the bHLH protein family.

It localises to the nucleus. The protein is Transcription factor bHLH138 of Arabidopsis thaliana (Mouse-ear cress).